An 87-amino-acid chain; its full sequence is Small ribosomal subunit protein bS20 (87 aa).

It belongs to the bacterial ribosomal protein bS20 family.

Binds directly to 16S ribosomal RNA. This Neorickettsia sennetsu (strain ATCC VR-367 / Miyayama) (Ehrlichia sennetsu) protein is Small ribosomal subunit protein bS20.